A 247-amino-acid polypeptide reads, in one-letter code: Protein SODIUM POTASSIUM ROOT DEFECTIVE 3 (247 aa).

Residues 130 to 166 are disordered; the sequence is GSTGQDTVATEESEASAPKRGSSGPVEEKKKSSGSGS. Positions 167–235 constitute an HMA domain; sequence DQVVVLRVSL…KVKNAQFWTP (69 aa). 2 residues coordinate a metal cation: cysteine 180 and cysteine 183.

The protein localises to the cytoplasm. Its function is as follows. Heavy metal-associated protein involved in salt tolerance. This Arabidopsis thaliana (Mouse-ear cress) protein is Protein SODIUM POTASSIUM ROOT DEFECTIVE 3.